Here is a 418-residue protein sequence, read N- to C-terminus: Tyrosine--tRNA ligase (418 aa).

Tyr34 provides a ligand contact to L-tyrosine. The short motif at 39-48 (PTGDSMHIGH) is the 'HIGH' region element. Positions 166 and 170 each coordinate L-tyrosine. The 'KMSKS' region signature appears at 228–232 (KFGKT). Lys231 lines the ATP pocket. Positions 350-417 (TNIVELLTET…KKNYFLAKVK (68 aa)) constitute an S4 RNA-binding domain.

It belongs to the class-I aminoacyl-tRNA synthetase family. TyrS type 1 subfamily. Homodimer.

Its subcellular location is the cytoplasm. It catalyses the reaction tRNA(Tyr) + L-tyrosine + ATP = L-tyrosyl-tRNA(Tyr) + AMP + diphosphate + H(+). In terms of biological role, catalyzes the attachment of tyrosine to tRNA(Tyr) in a two-step reaction: tyrosine is first activated by ATP to form Tyr-AMP and then transferred to the acceptor end of tRNA(Tyr). The chain is Tyrosine--tRNA ligase from Levilactobacillus brevis (Lactobacillus brevis).